A 146-amino-acid chain; its full sequence is Protein U1 (146 aa).

It belongs to the nanovirus U1 protein family.

The polypeptide is Protein U1 (DNA-U1) (Subterranean clover stunt virus (strain F) (SCSV)).